The primary structure comprises 330 residues: Zinc finger protein sdz-12 (330 aa).

5 consecutive C2H2-type zinc fingers follow at residues 27 to 48 (PQCQ…HMKH), 63 to 85 (FRCE…QITH), 91 to 113 (KKCS…LHNH), 120 to 144 (FDCP…LVNH), and 153 to 176 (APCG…HFDH). Low complexity predominate over residues 183 to 195 (SAPAPTSSARLSP). The interval 183-203 (SAPAPTSSARLSPITVSTSGS) is disordered. The C2H2-type 6 zinc-finger motif lies at 271-293 (FECKHCTIKFHDATMSIMHNALH).

It belongs to the krueppel C2H2-type zinc-finger protein family. As to expression, expressed in the somatic gonad.

Functionally, together with ehn-3, may play a role in gonadogenesis. The polypeptide is Zinc finger protein sdz-12 (Caenorhabditis elegans).